Consider the following 340-residue polypeptide: Phosphoribosylformylglycinamidine cyclo-ligase (340 aa).

It belongs to the AIR synthase family.

It localises to the cytoplasm. It catalyses the reaction 2-formamido-N(1)-(5-O-phospho-beta-D-ribosyl)acetamidine + ATP = 5-amino-1-(5-phospho-beta-D-ribosyl)imidazole + ADP + phosphate + H(+). It functions in the pathway purine metabolism; IMP biosynthesis via de novo pathway; 5-amino-1-(5-phospho-D-ribosyl)imidazole from N(2)-formyl-N(1)-(5-phospho-D-ribosyl)glycinamide: step 2/2. The protein is Phosphoribosylformylglycinamidine cyclo-ligase of Streptococcus gordonii (strain Challis / ATCC 35105 / BCRC 15272 / CH1 / DL1 / V288).